Consider the following 406-residue polypeptide: Peptide transporter imqD (406 aa).

The interval 1–25 (MTAPADSTEKSETSETTTLQTTEVS) is disordered. Over residues 14 to 25 (SETTTLQTTEVS) the composition is skewed to low complexity. 6 helical membrane passes run 184–204 (GLVA…LSQA), 220–240 (IPND…GPVI), 262–282 (ATGF…QKII), 309–329 (VFLQ…SFVT), 344–364 (AVVQ…GIAI), and 373–393 (LIWM…VFWI).

It belongs to the major facilitator superfamily. Proton-dependent oligopeptide transporter (POT/PTR) (TC 2.A.17) family.

It localises to the membrane. In terms of biological role, peptide transporter; part of the gene cluster that mediates the biosynthesis of imizoquins A to D, tripeptide-derived alkaloids that serve a protective role against oxidative stress that are essential for normal germination. The chain is Peptide transporter imqD from Aspergillus flavus (strain ATCC 200026 / FGSC A1120 / IAM 13836 / NRRL 3357 / JCM 12722 / SRRC 167).